The sequence spans 445 residues: Glutamate--tRNA ligase 2 (445 aa).

A 'HIGH' region motif is present at residues 10 to 20; the sequence is PSPTGMLHVGN. The 'KMSKS' region motif lies at 240 to 244; that stretch reads KISKR. Residue Lys243 coordinates ATP.

Belongs to the class-I aminoacyl-tRNA synthetase family. Glutamate--tRNA ligase type 1 subfamily. Monomer.

Its subcellular location is the cytoplasm. It carries out the reaction tRNA(Glu) + L-glutamate + ATP = L-glutamyl-tRNA(Glu) + AMP + diphosphate. Functionally, catalyzes the attachment of glutamate to tRNA(Glu) in a two-step reaction: glutamate is first activated by ATP to form Glu-AMP and then transferred to the acceptor end of tRNA(Glu). This chain is Glutamate--tRNA ligase 2, found in Rickettsia canadensis (strain McKiel).